Here is a 184-residue protein sequence, read N- to C-terminus: ATP synthase subunit b, chloroplastic (184 aa).

A helical membrane pass occupies residues leucine 27 to leucine 49.

Belongs to the ATPase B chain family. As to quaternary structure, F-type ATPases have 2 components, F(1) - the catalytic core - and F(0) - the membrane proton channel. F(1) has five subunits: alpha(3), beta(3), gamma(1), delta(1), epsilon(1). F(0) has four main subunits: a(1), b(1), b'(1) and c(10-14). The alpha and beta chains form an alternating ring which encloses part of the gamma chain. F(1) is attached to F(0) by a central stalk formed by the gamma and epsilon chains, while a peripheral stalk is formed by the delta, b and b' chains.

It is found in the plastid. Its subcellular location is the chloroplast thylakoid membrane. Its function is as follows. F(1)F(0) ATP synthase produces ATP from ADP in the presence of a proton or sodium gradient. F-type ATPases consist of two structural domains, F(1) containing the extramembraneous catalytic core and F(0) containing the membrane proton channel, linked together by a central stalk and a peripheral stalk. During catalysis, ATP synthesis in the catalytic domain of F(1) is coupled via a rotary mechanism of the central stalk subunits to proton translocation. Component of the F(0) channel, it forms part of the peripheral stalk, linking F(1) to F(0). This Nicotiana sylvestris (Wood tobacco) protein is ATP synthase subunit b, chloroplastic.